The following is a 305-amino-acid chain: MWVLINLLILMIMVLISVAFLTLLERKILGYIQDRKGPNKIMLFGMFQPFSDALKLLSKEWFFFNYSNLFIYSPMLMFFLSLVMWILYPWFGFMYYIEFSILFMLLVLGLSVYPVLFVGWISNCNYAILGSMRLVSTMISFEINLFFLVFSLMMMVESFSFNEFFFFQNNIKFAILLYPLYLMMFTSMLIELNRTPFDLIEGESELVSGFNIEYHSSMFVLIFLSEYMNIMFMSVILSLMFYGFKYWSIKFILIYLFHICLIIWIRGILPRIRYDKLMNMCWTEMLMLVMIYLMYLYFMKEFLCI.

8 helical membrane-spanning segments follow: residues 1-21 (MWVLINLLILMIMVLISVAFL), 75-95 (MLMFFLSLVMWILYPWFGFMY), 101-121 (ILFMLLVLGLSVYPVLFVGWI), 134-154 (LVSTMISFEINLFFLVFSLMM), 173-193 (FAILLYPLYLMMFTSMLIELN), 219-239 (FVLIFLSEYMNIMFMSVILSL), 249-269 (IKFILIYLFHICLIIWIRGIL), and 285-305 (MLMLVMIYLMYLYFMKEFLCI).

The protein belongs to the complex I subunit 1 family.

It localises to the mitochondrion inner membrane. The catalysed reaction is a ubiquinone + NADH + 5 H(+)(in) = a ubiquinol + NAD(+) + 4 H(+)(out). Core subunit of the mitochondrial membrane respiratory chain NADH dehydrogenase (Complex I) that is believed to belong to the minimal assembly required for catalysis. Complex I functions in the transfer of electrons from NADH to the respiratory chain. The immediate electron acceptor for the enzyme is believed to be ubiquinone. The chain is NADH-ubiquinone oxidoreductase chain 1 (ND1) from Apis mellifera ligustica (Common honeybee).